We begin with the raw amino-acid sequence, 411 residues long: Probable phosphatase HAD1 (411 aa).

Residues 14–23 (LPSPNTSQPP) show a composition bias toward polar residues. Residues 14-33 (LPSPNTSQPPSAAPSRRGSF) form a disordered region. Residue D61 is the Nucleophile of the active site. Mg(2+)-binding residues include D61, D63, and D338. D63 acts as the Proton donor in catalysis. A disordered region spans residues 296–386 (PRPTPDVTPV…QSGQAGVTLD (91 aa)). Positions 326–345 (VRNTQTIMKGSDDLTGNDSV) are enriched in polar residues. Positions 362-373 (SVEKRAEMEFHR) are enriched in basic and acidic residues.

This sequence belongs to the HAD-like hydrolase superfamily. Phosphorylated.

Probable phosphatase. Required for cell wall integrity and virulence. This is Probable phosphatase HAD1 from Cryptococcus neoformans var. grubii serotype A (strain H99 / ATCC 208821 / CBS 10515 / FGSC 9487) (Filobasidiella neoformans var. grubii).